The primary structure comprises 585 residues: DNA ligase (585 aa).

Glu278 is an ATP binding site. Lys280 serves as the catalytic N6-AMP-lysine intermediate. Positions 285, 301, 330, 370, 444, and 450 each coordinate ATP.

Belongs to the ATP-dependent DNA ligase family. Requires Mg(2+) as cofactor.

The enzyme catalyses ATP + (deoxyribonucleotide)n-3'-hydroxyl + 5'-phospho-(deoxyribonucleotide)m = (deoxyribonucleotide)n+m + AMP + diphosphate.. DNA ligase that seals nicks in double-stranded DNA during DNA replication, DNA recombination and DNA repair. The polypeptide is DNA ligase (Haloferax volcanii (strain ATCC 29605 / DSM 3757 / JCM 8879 / NBRC 14742 / NCIMB 2012 / VKM B-1768 / DS2) (Halobacterium volcanii)).